We begin with the raw amino-acid sequence, 359 residues long: Phosphate acyltransferase (359 aa).

Belongs to the PlsX family. Homodimer. Probably interacts with PlsY.

It localises to the cytoplasm. It catalyses the reaction a fatty acyl-[ACP] + phosphate = an acyl phosphate + holo-[ACP]. It functions in the pathway lipid metabolism; phospholipid metabolism. Functionally, catalyzes the reversible formation of acyl-phosphate (acyl-PO(4)) from acyl-[acyl-carrier-protein] (acyl-ACP). This enzyme utilizes acyl-ACP as fatty acyl donor, but not acyl-CoA. This Salmonella agona (strain SL483) protein is Phosphate acyltransferase.